The sequence spans 377 residues: tRNA(Met) cytidine acetate ligase (377 aa).

Residues 7-20, Gly100, Asn153, and Arg178 each bind ATP; that span reads ITEY…HLFH.

This sequence belongs to the TmcAL family.

Its subcellular location is the cytoplasm. The enzyme catalyses cytidine(34) in elongator tRNA(Met) + acetate + ATP = N(4)-acetylcytidine(34) in elongator tRNA(Met) + AMP + diphosphate. Catalyzes the formation of N(4)-acetylcytidine (ac(4)C) at the wobble position of elongator tRNA(Met), using acetate and ATP as substrates. First activates an acetate ion to form acetyladenylate (Ac-AMP) and then transfers the acetyl group to tRNA to form ac(4)C34. The sequence is that of tRNA(Met) cytidine acetate ligase from Staphylococcus epidermidis (strain ATCC 35984 / DSM 28319 / BCRC 17069 / CCUG 31568 / BM 3577 / RP62A).